The sequence spans 333 residues: Adenosine deaminase (333 aa).

2 residues coordinate Zn(2+): H12 and H14. 3 residues coordinate substrate: H14, D16, and G170. H197 serves as a coordination point for Zn(2+). The Proton donor role is filled by E200. Position 278 (D278) interacts with Zn(2+). D279 provides a ligand contact to substrate.

The protein belongs to the metallo-dependent hydrolases superfamily. Adenosine and AMP deaminases family. Adenosine deaminase subfamily. It depends on Zn(2+) as a cofactor.

The catalysed reaction is adenosine + H2O + H(+) = inosine + NH4(+). The enzyme catalyses 2'-deoxyadenosine + H2O + H(+) = 2'-deoxyinosine + NH4(+). Functionally, catalyzes the hydrolytic deamination of adenosine and 2-deoxyadenosine. The protein is Adenosine deaminase of Shigella sonnei (strain Ss046).